The following is a 1103-amino-acid chain: Voltage-dependent calcium channel subunit alpha-2/delta-1 (1103 aa).

Positions 1–24 (MAAGCLLALTLTLFQSLLIGPSSE) are cleaved as a signal peptide. Residues 25-1073 (EPFPSAVTIK…VLEDYTDCGG (1049 aa)) lie on the Extracellular side of the membrane. N-linked (GlcNAc...) asparagine glycosylation occurs at Asn-92. Position 119 is a phosphoserine (Ser-119). N-linked (GlcNAc...) asparagine glycans are attached at residues Asn-136 and Asn-184. Residues 253 to 430 (DMLILVDVSG…INTQEYLDVL (178 aa)) enclose the VWFA domain. A divalent metal cation is bound by residues Asp-259, Ser-261, and Ser-263. An MIDAS-like motif motif is present at residues 259 to 263 (DVSGS). Residues Asn-324, Asn-348, Asn-468, Asn-475, Asn-604, Asn-613, Asn-675, Asn-781, Asn-824, Asn-888, Asn-895, Asn-985, and Asn-998 are each glycosylated (N-linked (GlcNAc...) asparagine). Cys-404 and Cys-1059 form a disulfide bridge. Residues 446-556 (WTNVYLDALE…NIQNPKSQEP (111 aa)) form the Cache domain. The chain crosses the membrane as a helical span at residues 1074 to 1094 (VSGLNPSLWYIIGIQFLLLWL). At 1095-1103 (VSGSTHRLL) the chain is on the cytoplasmic side.

Belongs to the calcium channel subunit alpha-2/delta family. As to quaternary structure, dimer formed of alpha-2-1 and delta-1 chains; disulfide-linked. Voltage-dependent calcium channels are multisubunit complexes, consisting of alpha-1 (CACNA1), alpha-2 (CACNA2D), beta (CACNB) and delta (CACNA2D) subunits in a 1:1:1:1 ratio. Post-translationally, proteolytically processed into subunits alpha-2-1 and delta-1 that are disulfide-linked. In terms of tissue distribution, isoform 1 is expressed in skeletal muscle. Isoform 2 is expressed in the central nervous system. Isoform 2, isoform 4 and isoform 5 are expressed in neuroblastoma cells. Isoform 3, isoform 4 and isoform 5 are expressed in the aorta.

It localises to the membrane. Its subcellular location is the cell membrane. Its function is as follows. The alpha-2/delta subunit of voltage-dependent calcium channels regulates calcium current density and activation/inactivation kinetics of the calcium channel. Plays an important role in excitation-contraction coupling. The protein is Voltage-dependent calcium channel subunit alpha-2/delta-1 (CACNA2D1) of Homo sapiens (Human).